The primary structure comprises 250 residues: uncharacterized protein (250 aa).

Helical transmembrane passes span 36–56 (VALG…VPAV), 73–93 (PLYM…GFAM), 101–121 (AGAL…SVML), 128–148 (VAAT…FGYT), 156–176 (FGSF…VSIF), 180–200 (PALL…LIAY), and 225–245 (FGAL…LSFF).

It belongs to the BI1 family.

It localises to the cell membrane. This is an uncharacterized protein from Caulobacter vibrioides (strain ATCC 19089 / CIP 103742 / CB 15) (Caulobacter crescentus).